Consider the following 144-residue polypeptide: Maximins 6/H10 (144 aa).

An N-terminal signal peptide occupies residues methionine 1–alanine 18. Residues arginine 19–arginine 43 constitute a propeptide that is removed on maturation. Asparagine 70 bears the Asparagine amide mark. Residues threonine 74 to arginine 123 constitute a propeptide that is removed on maturation. Leucine 143 bears the Leucine amide mark.

It belongs to the bombinin family. In terms of tissue distribution, expressed by the skin glands.

The protein localises to the secreted. Functionally, maximin-6 shows antimicrobial activity against bacteria and against the fungus C.albicans. It has little hemolytic activity. Maximin-H10 shows antimicrobial activity against bacteria and against the fungus C.albicans. Shows strong hemolytic activity. In Bombina maxima (Giant fire-bellied toad), this protein is Maximins 6/H10.